Here is a 156-residue protein sequence, read N- to C-terminus: Transcriptional repressor NrdR (156 aa).

The segment at 3–34 (CPFCQHGHSRVIDSRVIEAGSAIRRRRECSQC) is a zinc-finger region. In terms of domain architecture, ATP-cone spans 46 to 136 (LLVLKRNGVT…VYKSFESADD (91 aa)).

It belongs to the NrdR family. Requires Zn(2+) as cofactor.

Functionally, negatively regulates transcription of bacterial ribonucleotide reductase nrd genes and operons by binding to NrdR-boxes. The polypeptide is Transcriptional repressor NrdR (Corynebacterium efficiens (strain DSM 44549 / YS-314 / AJ 12310 / JCM 11189 / NBRC 100395)).